Consider the following 831-residue polypeptide: Prickle-like protein 1 (831 aa).

The PET domain occupies 14–122 (FGCQRSSTSD…TIKLLSRAMM (109 aa)). LIM zinc-binding domains lie at 124–189 (AVCE…LLKP), 189–249 (PRCS…LYAE), and 249–313 (EYCE…EDIH). The disordered stretch occupies residues 314 to 346 (ASDSSDSAFQSARSRDSRRSVRMGRSSRSADQC). Serine 315, serine 591, and serine 594 each carry phosphoserine. Disordered stretches follow at residues 664–688 (EERG…NALN) and 763–831 (CSSS…CIIS). The span at 669-680 (RPHHHRHRRSRK) shows a compositional bias: basic residues. Position 683 is a phosphoserine (serine 683). Over residues 797-812 (DLSSPASALPTPQFNQ) the composition is skewed to polar residues. Over residues 815 to 831 (TKSKKKKGHRGKNCIIS) the composition is skewed to basic residues. Cysteine 828 bears the Cysteine methyl ester mark. A lipid anchor (S-farnesyl cysteine) is attached at cysteine 828. Positions 829-831 (IIS) are cleaved as a propeptide — removed in mature form.

The protein belongs to the prickle / espinas / testin family. As to quaternary structure, interacts with REST.

The protein localises to the nucleus membrane. Its subcellular location is the cytoplasm. It localises to the cytosol. Functionally, involved in the planar cell polarity pathway that controls convergent extension during gastrulation and neural tube closure. Convergent extension is a complex morphogenetic process during which cells elongate, move mediolaterally, and intercalate between neighboring cells, leading to convergence toward the mediolateral axis and extension along the anteroposterior axis. Necessary for nuclear localization of REST. May serve as nuclear receptor. In Rattus norvegicus (Rat), this protein is Prickle-like protein 1 (Prickle1).